We begin with the raw amino-acid sequence, 453 residues long: V-type proton ATPase subunit B (453 aa).

R341 is an ATP binding site.

This sequence belongs to the ATPase alpha/beta chains family. As to quaternary structure, V-ATPase is a heteromultimeric enzyme made up of two complexes: the ATP-hydrolytic V1 complex and the proton translocation V0 complex. The V1 complex consists of three catalytic AB heterodimers that form a heterohexamer, three peripheral stalks each consisting of EG heterodimers, one central rotor including subunits D and F, and the regulatory subunits C and H. The proton translocation complex V0 consists of the proton transport subunit a, a ring of proteolipid subunits c9c'', rotary subunit d, subunits e and f, and two accessory subunits.

Its function is as follows. Non-catalytic subunit of the V1 complex of vacuolar(H+)-ATPase (V-ATPase), a multisubunit enzyme composed of a peripheral complex (V1) that hydrolyzes ATP and a membrane integral complex (V0) that translocates protons. V-ATPase is responsible for acidifying and maintaining the pH of intracellular compartments and in some cell types, is targeted to the plasma membrane, where it is responsible for acidifying the extracellular environment. Essential for the proper assembly and activity of V-ATPase. The polypeptide is V-type proton ATPase subunit B (ATP6V1B) (Gallus gallus (Chicken)).